The following is a 339-amino-acid chain: UDP-N-acetylenolpyruvoylglucosamine reductase (339 aa).

Residues G16 to Q188 enclose the FAD-binding PCMH-type domain. Residue R164 is part of the active site. S238 acts as the Proton donor in catalysis. E334 is a catalytic residue.

The protein belongs to the MurB family. FAD serves as cofactor.

The protein localises to the cytoplasm. The catalysed reaction is UDP-N-acetyl-alpha-D-muramate + NADP(+) = UDP-N-acetyl-3-O-(1-carboxyvinyl)-alpha-D-glucosamine + NADPH + H(+). The protein operates within cell wall biogenesis; peptidoglycan biosynthesis. Cell wall formation. The polypeptide is UDP-N-acetylenolpyruvoylglucosamine reductase (Amoebophilus asiaticus (strain 5a2)).